Reading from the N-terminus, the 256-residue chain is Triosephosphate isomerase (256 aa).

Asparagine 12–lysine 14 lines the substrate pocket. The Electrophile role is filled by histidine 99. Glutamate 169 (proton acceptor) is an active-site residue. Substrate contacts are provided by residues glycine 175, serine 214, and glycine 235 to glycine 236.

It belongs to the triosephosphate isomerase family. Homodimer.

It localises to the cytoplasm. The enzyme catalyses D-glyceraldehyde 3-phosphate = dihydroxyacetone phosphate. Its pathway is carbohydrate biosynthesis; gluconeogenesis. It functions in the pathway carbohydrate degradation; glycolysis; D-glyceraldehyde 3-phosphate from glycerone phosphate: step 1/1. Functionally, involved in the gluconeogenesis. Catalyzes stereospecifically the conversion of dihydroxyacetone phosphate (DHAP) to D-glyceraldehyde-3-phosphate (G3P). The sequence is that of Triosephosphate isomerase from Rhizobium etli (strain ATCC 51251 / DSM 11541 / JCM 21823 / NBRC 15573 / CFN 42).